We begin with the raw amino-acid sequence, 520 residues long: Putative hydrolase Mb2247c (520 aa).

Positions 1–34 (MAAMWRRRPLSSALLSFGLLLGGLPLAAPPLAGA) are cleaved as a signal peptide. Residues 104-124 (FGALLVNPGGPGASAVDMVAA) traverse the membrane as a helical segment. In terms of domain architecture, AB hydrolase-1 spans 105-403 (GALLVNPGGP…APTPADPAAW (299 aa)). Ser-232 serves as the catalytic Nucleophile. Asp-461 is an active-site residue. His-488 (proton donor) is an active-site residue.

The protein belongs to the peptidase S33 family.

It localises to the cell membrane. The polypeptide is Putative hydrolase Mb2247c (Mycobacterium bovis (strain ATCC BAA-935 / AF2122/97)).